The following is a 313-amino-acid chain: Inner membrane ABC transporter permease protein YdcU (313 aa).

Residues 1–25 (MAMNVLQSPSRPGLGKVSGFFWHNP) lie on the Cytoplasmic side of the membrane. The helical transmembrane segment at 26–46 (GLGLFLLLLGPLMWFGIVYFG) threads the bilayer. Topologically, residues 47-92 (SLLTLLWQGFYTFDDFTMSVTPELTLANIRALFNPANYDIILRTLT) are periplasmic. The 216-residue stretch at 87 to 302 (ILRTLTMAVA…PIILIALYLA (216 aa)) folds into the ABC transmembrane type-1 domain. A helical membrane pass occupies residues 93-113 (MAVAVTIASAILAFPMAWYMA). At 114–122 (RYTSGKMKA) the chain is on the cytoplasmic side. A helical transmembrane segment spans residues 123 to 143 (FFYIAVMLPMWASYIVKAYAW). The Periplasmic portion of the chain corresponds to 144 to 154 (TLLLAKDGVAQ). A helical transmembrane segment spans residues 155–175 (WFLQHLGLEPLLTAFLTLPAV). The Cytoplasmic segment spans residues 176–187 (GGNTLSTSGLGR). A helical membrane pass occupies residues 188–208 (FLVFLYIWLPFMILPVQAALE). At 209–230 (RLPPSLLQASADLGARPRQTFR) the chain is on the periplasmic side. Residues 231–251 (YVVLPLAIPGIAAGSIFTFSL) traverse the membrane as a helical segment. Threonine 252 is a topological domain (cytoplasmic). Residues 253–273 (LGDFIVPQLVGPPGYFIGNMV) traverse the membrane as a helical segment. Over 274 to 283 (YSQQGAIGNM) the chain is Periplasmic. The helical transmembrane segment at 284-304 (PMAAAFTLVPIILIALYLAFV) threads the bilayer. The Cytoplasmic portion of the chain corresponds to 305–313 (KRLGAFDAL).

It belongs to the binding-protein-dependent transport system permease family. CysTW subfamily.

It localises to the cell inner membrane. Probably part of the ABC transporter complex YdcSTUV. Probably responsible for the translocation of the substrate across the membrane. The polypeptide is Inner membrane ABC transporter permease protein YdcU (ydcU) (Escherichia coli (strain K12)).